The primary structure comprises 37 residues: Large ribosomal subunit protein bL36c (37 aa).

It belongs to the bacterial ribosomal protein bL36 family.

It is found in the plastid. The protein localises to the chloroplast. This Gracilaria tenuistipitata var. liui (Red alga) protein is Large ribosomal subunit protein bL36c.